Consider the following 369-residue polypeptide: MKKNIGLIGWRGMVGSVLVERMICENDFFHFNPIFFSTSQKNSKGPTINGEYFGVLKDAYDLDILKELDILISCQGSDYTNKVYFKLRDIGWNGYWIDAASVLRMNQDTVIILDPVNSNTIRESIDSGFKTFVGGNCTVSLMLMSLGGLFSEKLIEWITVSTYQAASGSGAKYIEELLMQMGSMYTEASGYLGNPAHSILNIEKKVRNLSCSDKFPKKNFKVPLAGSLIPWIDKKMRNGQSREEWKIQAETNKILSSNKDILIDGLCVRIGALRCHSQSFVIKLKKDISIPEIEQILLNHNSWTKVIPNRKHDTMTELTPAAVTGTLNTPVGRLRKLNIGQKYLSAFTVGDQLLWGASEPLRRMLKFLI.

NADP(+) contacts are provided by residues Arg-11 to Val-14, Thr-38 to Ser-39, and Gln-75. A phosphate-binding site is contributed by Arg-104. Cys-137 (acyl-thioester intermediate) is an active-site residue. Gln-164 provides a ligand contact to substrate. Residues Ser-167 to Gly-168 and Pro-195 contribute to the NADP(+) site. Glu-243 contributes to the substrate binding site. Lys-246 serves as a coordination point for phosphate. Arg-269 provides a ligand contact to substrate. The Proton acceptor role is filled by His-276. Position 352 (Gln-352) interacts with NADP(+).

The protein belongs to the aspartate-semialdehyde dehydrogenase family. Homodimer.

The catalysed reaction is L-aspartate 4-semialdehyde + phosphate + NADP(+) = 4-phospho-L-aspartate + NADPH + H(+). It functions in the pathway amino-acid biosynthesis; L-lysine biosynthesis via DAP pathway; (S)-tetrahydrodipicolinate from L-aspartate: step 2/4. The protein operates within amino-acid biosynthesis; L-methionine biosynthesis via de novo pathway; L-homoserine from L-aspartate: step 2/3. It participates in amino-acid biosynthesis; L-threonine biosynthesis; L-threonine from L-aspartate: step 2/5. Its function is as follows. Catalyzes the NADPH-dependent formation of L-aspartate-semialdehyde (L-ASA) by the reductive dephosphorylation of L-aspartyl-4-phosphate. This Buchnera aphidicola subsp. Baizongia pistaciae (strain Bp) protein is Aspartate-semialdehyde dehydrogenase.